The chain runs to 62 residues: Large ribosomal subunit protein eL37 (62 aa).

Cysteine 20, cysteine 23, cysteine 35, and cysteine 38 together coordinate Zn(2+). The C4-type zinc-finger motif lies at 20–38 (CRRCGRKAFNVKKGYCAAC).

The protein belongs to the eukaryotic ribosomal protein eL37 family. Zn(2+) serves as cofactor.

Functionally, binds to the 23S rRNA. The chain is Large ribosomal subunit protein eL37 (rpl37e) from Pyrococcus abyssi (strain GE5 / Orsay).